The chain runs to 236 residues: MRTPRRHCRRIAVLAAVSIAATVVAGCSSGSKPSGGPLPDAKPLVEEATAQTKALKSAHMVLTVNGKIPGLSLKTLSGDLTTNPTAATGNVKLTLGGSDIDADFVVFDGILYATLTPNQWSDFGPAADIYDPAQVLNPDTGLANVLANFADAKAEGRDTINGQNTIRISGKVSAQAVNQIAPPFNATQPVPATVWIQETGDHQLAQAQLDRGSGNSVQMTLSKWGEKVQVTKPPVS.

Positions 1–26 (MRTPRRHCRRIAVLAAVSIAATVVAG) are cleaved as a signal peptide. Residue cysteine 27 is the site of N-palmitoyl cysteine attachment. Cysteine 27 carries S-diacylglycerol cysteine lipidation.

Belongs to the LppX/LprAFG lipoprotein family. In terms of processing, modified by Lgt on Cys-27 with an S-linked diacylglyceral, signal peptide is removed by LspA, Cys-27 is further modifed with a fatty acid on its amino group by Lnt yielding a triacylated protein.

It is found in the cell inner membrane. The protein localises to the secreted. The protein resides in the cell wall. In terms of biological role, helps membrane protein Mb1445c (P55) transport triacylglycerides (TAG) across the inner cell membrane into the periplasm and probably ultimately to the outer membrane. Binds TAG in its hydrophobic cavity and transfers it between lipid bilayers. TAG probably regulates lipid metabolism and growth regulation and plays a structural role in the outer membrane. Binds di- and triacylated phosphatidyl-myo-inositol mannosides (PIMs), and glycolipid lipoglycan modulins lipoarabinomannan (LAM) and lipomannan (LM), facilitating their recognition by TLR2. Required for activity of drug efflux transporter Mb1445c. Required, probably with Mb1445c, for normal surface localization of LAM. Functionally, constitutes a host TLR2 agonist (toll-like receptor). This Mycobacterium bovis (strain ATCC BAA-935 / AF2122/97) protein is Lipoarabinomannan carrier protein LprG.